Here is a 334-residue protein sequence, read N- to C-terminus: Replication-associated protein (334 aa).

The region spanning 9–111 (RLQSKYVFLT…DGDIKTRGDF (103 aa)) is the CRESS-DNA virus Rep endonuclease domain. Positions 16–19 (FLTY) match the RCR-1 motif. Residues glutamate 50, histidine 58, and histidine 60 each coordinate a divalent metal cation. Residues 58–60 (HYH) carry the RCR-2 motif. The active-site For DNA cleavage activity is the tyrosine 98. The RCR-3 signature appears at 98-101 (YISK). Aspartate 102 is a binding site for a divalent metal cation. Residues 160 to 172 (SANKLFPPQPEQY) form an oligomerization region. 213–220 (GPTRTGKT) is a binding site for ATP. The tract at residues 236 to 254 (IDFTNYDEHATYNIIDDIP) is transactivation. Residues 276 to 286 (KYGKKKKIKGG) carry the Nuclear localization signal motif.

This sequence belongs to the geminiviridae Rep protein family. Homooligomer. Rep binds to repeated DNA motifs (iterons). Forms the O-complex, which is a Rep-DNA complex involved in the initiation of RCR. Part of the C- and V-complexes which are RepA-Rep-DNA complexes involved in the c-sense and v-sense transcription. Mg(2+) serves as cofactor. Mn(2+) is required as a cofactor.

It is found in the host nucleus. Its function is as follows. Essential for the replication of viral ssDNA. The closed circular ssDNA genome is first converted to a superhelical dsDNA. Rep binds a specific region at the genome origin of replication. It introduces an endonucleolytic nick within the conserved sequence 5'-TAATATTAC-3' in the intergenic region of the genome present in all geminiviruses, thereby initiating the rolling circle replication (RCR). Following cleavage, binds covalently to the 5'-phosphate of DNA as a tyrosyl ester. The cleavage gives rise to a free 3'-OH that serves as a primer for the cellular DNA polymerase. The polymerase synthesizes the (+) strand DNA by rolling circle mechanism. After one round of replication, a Rep-catalyzed nucleotidyl transfer reaction releases a circular single-stranded virus genome, thereby terminating the replication. Displays origin-specific DNA cleavage, nucleotidyl transferase, ATPase and helicase activities. Acts a an inhibitor of C-sense gene transcription. This chain is Replication-associated protein, found in Phaseolus vulgaris (Kidney bean).